The sequence spans 465 residues: Kynurenine 3-monooxygenase (465 aa).

Residues 1 to 26 form a disordered region; that stretch reads MSPGIVSQEVNGRQEPTEAARDERHG. A compositionally biased stretch (basic and acidic residues) spans 15 to 25; that stretch reads EPTEAARDERH. A run of 2 helical transmembrane segments spans residues 405-427 and 440-462; these read LLFR…SMPY and LLKR…IYAQ.

This sequence belongs to the aromatic-ring hydroxylase family. KMO subfamily. It depends on FAD as a cofactor.

It localises to the mitochondrion. Its subcellular location is the membrane. The catalysed reaction is L-kynurenine + NADPH + O2 + H(+) = 3-hydroxy-L-kynurenine + NADP(+) + H2O. Its pathway is cofactor biosynthesis; NAD(+) biosynthesis; quinolinate from L-kynurenine: step 1/3. Catalyzes the hydroxylation of L-kynurenine (L-Kyn) to form 3-hydroxy-L-kynurenine (L-3OHKyn). Required for synthesis of quinolinic acid. This Drosophila melanogaster (Fruit fly) protein is Kynurenine 3-monooxygenase.